Consider the following 894-residue polypeptide: Translation initiation factor IF-2 (894 aa).

The segment at 47–305 (AHLNRENGSG…GSALQQSFQK (259 aa)) is disordered. A compositionally biased stretch (polar residues) spans 68-82 (STLNIPGTGGKSKSV). 2 stretches are compositionally biased toward basic and acidic residues: residues 93-159 (VKRD…KDKV) and 166-219 (DMTK…KWTD). The span at 254–269 (GRSRNAKAARPAKKGN) shows a compositional bias: basic residues. The segment covering 270 to 283 (KHSESKADREEARA) has biased composition (basic and acidic residues). The 170-residue stretch at 393 to 562 (PRAPVVTIMG…LLQAEVLELK (170 aa)) folds into the tr-type G domain. The tract at residues 402-409 (GHVDHGKT) is G1. 402–409 (GHVDHGKT) lines the GTP pocket. Positions 427-431 (GITQH) are G2. The interval 448 to 451 (DTPG) is G3. GTP-binding positions include 448-452 (DTPGH) and 502-505 (NKID). The tract at residues 502-505 (NKID) is G4. The interval 538–540 (SAK) is G5.

It belongs to the TRAFAC class translation factor GTPase superfamily. Classic translation factor GTPase family. IF-2 subfamily.

It is found in the cytoplasm. Its function is as follows. One of the essential components for the initiation of protein synthesis. Protects formylmethionyl-tRNA from spontaneous hydrolysis and promotes its binding to the 30S ribosomal subunits. Also involved in the hydrolysis of GTP during the formation of the 70S ribosomal complex. The protein is Translation initiation factor IF-2 of Citrobacter koseri (strain ATCC BAA-895 / CDC 4225-83 / SGSC4696).